The sequence spans 472 residues: Selenium-binding protein 2 (472 aa).

Ser-467 is subject to Phosphoserine.

Belongs to the selenium-binding protein family. In terms of processing, the N-terminus is blocked. As to expression, mainly expressed in liver.

It localises to the nucleus. The protein localises to the cytoplasm. The protein resides in the cytosol. It is found in the membrane. Its function is as follows. Selenium- and acetaminophen-binding protein which may be involved in the sensing of reactive xenobiotics in the cytoplasm. May be involved in intra-Golgi protein transport. The sequence is that of Selenium-binding protein 2 (Selenbp2) from Mus musculus (Mouse).